The chain runs to 104 residues: MSSVPASAYLTLAIILFCIGLFGALTKRNTVIVLVCIELMLNAANLNLVAFSKLGLFPNLTGQIFSLFTMAVAAAEAAVGLAILIALYRNRTTVHVDEMDTLKG.

3 helical membrane-spanning segments follow: residues 4 to 24 (VPASAYLTLAIILFCIGLFGA), 31 to 51 (VIVLVCIELMLNAANLNLVAF), and 67 to 87 (LFTMAVAAAEAAVGLAILIAL).

It belongs to the complex I subunit 4L family. In terms of assembly, NDH-1 is composed of 14 different subunits. Subunits NuoA, H, J, K, L, M, N constitute the membrane sector of the complex.

The protein resides in the cell membrane. The catalysed reaction is a quinone + NADH + 5 H(+)(in) = a quinol + NAD(+) + 4 H(+)(out). In terms of biological role, NDH-1 shuttles electrons from NADH, via FMN and iron-sulfur (Fe-S) centers, to quinones in the respiratory chain. The immediate electron acceptor for the enzyme in this species is believed to be a menaquinone. Couples the redox reaction to proton translocation (for every two electrons transferred, four hydrogen ions are translocated across the cytoplasmic membrane), and thus conserves the redox energy in a proton gradient. The chain is NADH-quinone oxidoreductase subunit K from Bacillus cereus (strain AH820).